Here is a 144-residue protein sequence, read N- to C-terminus: Histone H2B.2, sperm (144 aa).

Positions 1-51 (MPRSPAKTSPRKGSPRKGSPSRKASPKRGGKGAKRAGKGGRRRRVVKRRRR) are disordered. 5 consecutive short sequence motifs (SPKK motif) follow at residues 4-7 (SPAK), 9-12 (SPRK), 14-17 (SPRK), 19-22 (SPSR), and 25-28 (SPKR). 3 positions are modified to phosphoserine: Ser14, Ser19, and Ser25. A compositionally biased stretch (basic residues) spans 24–51 (ASPKRGGKGAKRAGKGGRRRRVVKRRRR). Ser131 carries an O-linked (GlcNAc) serine glycan. Lys139 is covalently cross-linked (Glycyl lysine isopeptide (Lys-Gly) (interchain with G-Cter in ubiquitin)).

It belongs to the histone H2B family. As to quaternary structure, the nucleosome is a histone octamer containing two molecules each of H2A, H2B, H3 and H4 assembled in one H3-H4 heterotetramer and two H2A-H2B heterodimers. The octamer wraps approximately 147 bp of DNA. Post-translationally, monoubiquitination of Lys-139 gives a specific tag for epigenetic transcriptional activation and is also prerequisite for histone H3 'Lys-4' and 'Lys-79' methylation. Phosphorylated on SPKK motifs 3, 4 and 5; which may regulate DNA binding. Dephosphorylated during maturation of spermatids to mature sperm and rephosphorylated at fertilization.

It localises to the nucleus. The protein resides in the chromosome. Functionally, core component of nucleosome. Nucleosomes wrap and compact DNA into chromatin, limiting DNA accessibility to the cellular machineries which require DNA as a template. Histones thereby play a central role in transcription regulation, DNA repair, DNA replication and chromosomal stability. DNA accessibility is regulated via a complex set of post-translational modifications of histones, also called histone code, and nucleosome remodeling. This is Histone H2B.2, sperm from Parechinus angulosus (Angulate sea urchin).